The primary structure comprises 248 residues: 3-deoxy-manno-octulosonate cytidylyltransferase (248 aa).

It belongs to the KdsB family.

The protein localises to the cytoplasm. It catalyses the reaction 3-deoxy-alpha-D-manno-oct-2-ulosonate + CTP = CMP-3-deoxy-beta-D-manno-octulosonate + diphosphate. The protein operates within nucleotide-sugar biosynthesis; CMP-3-deoxy-D-manno-octulosonate biosynthesis; CMP-3-deoxy-D-manno-octulosonate from 3-deoxy-D-manno-octulosonate and CTP: step 1/1. Its pathway is bacterial outer membrane biogenesis; lipopolysaccharide biosynthesis. Its function is as follows. Activates KDO (a required 8-carbon sugar) for incorporation into bacterial lipopolysaccharide in Gram-negative bacteria. The chain is 3-deoxy-manno-octulosonate cytidylyltransferase from Chlorobium chlorochromatii (strain CaD3).